We begin with the raw amino-acid sequence, 420 residues long: Diphosphomevalonate decarboxylase 2 (420 aa).

Position 25 to 28 (25 to 28 (YWGK)) interacts with (R)-5-diphosphomevalonate. The Peroxisomal targeting signal PTS2 signature appears at 42–50 (SVTLDPDHL). Residues Arg-80, 163–168 (SGSACR), and Thr-219 contribute to the (R)-5-diphosphomevalonate site.

This sequence belongs to the diphosphomevalonate decarboxylase family. Homodimer.

The protein localises to the peroxisome. The enzyme catalyses (R)-5-diphosphomevalonate + ATP = isopentenyl diphosphate + ADP + phosphate + CO2. The protein operates within isoprenoid biosynthesis; isopentenyl diphosphate biosynthesis via mevalonate pathway; isopentenyl diphosphate from (R)-mevalonate: step 3/3. In terms of biological role, performs the first committed step in the biosynthesis of isoprene-containing compounds such as sterols and terpenoids. Component of the triterpenes (e.g. ginsenosides or panaxosides) and phytosterols biosynthetic pathways. Promotes the accumulation of stigmasterol and beta-sitosterol. The sequence is that of Diphosphomevalonate decarboxylase 2 from Panax ginseng (Korean ginseng).